Here is a 688-residue protein sequence, read N- to C-terminus: PTS system glucoside-specific EIICBA component (688 aa).

Residues 3 to 427 (KKLFGQLQRI…FKLKTPGRED (425 aa)) enclose the PTS EIIC type-1 domain. 10 helical membrane passes run 12–32 (IGKA…LLAF), 81–101 (LGLA…YLIM), 137–157 (LVLG…MGAL), 182–202 (FVPI…SFAW), 223–243 (LTTF…LHHI), 284–304 (AFTT…AFAI), 315–335 (IVGG…ITEP), 340–360 (FLFV…TSFL), 364–384 (LLGV…ILYG), and 395–415 (LVIP…DFAI). Positions 438-519 (AKLPFDVLDA…AKIMSGEITK (82 aa)) constitute a PTS EIIB type-1 domain. Cys460 acts as the Phosphocysteine intermediate; for EIIB activity in catalysis. In terms of domain architecture, PTS EIIA type-1 spans 560-664 (DQVFAGKMMG…SIVTPMIITN (105 aa)). The active-site Tele-phosphohistidine intermediate; for EIIA activity is His612.

The protein localises to the cell membrane. Its function is as follows. The phosphoenolpyruvate-dependent sugar phosphotransferase system (sugar PTS), a major carbohydrate active -transport system, catalyzes the phosphorylation of incoming sugar substrates concomitantly with their translocation across the cell membrane. This system is involved in alpha- and beta-glucoside transport. The polypeptide is PTS system glucoside-specific EIICBA component (glcB) (Staphylococcus aureus (strain MRSA252)).